The primary structure comprises 402 residues: Propionate kinase (402 aa).

Residues Asn11 and Lys18 each coordinate ATP. Asn11 provides a ligand contact to Mg(2+). Arg86 provides a ligand contact to substrate. The active-site Proton donor/acceptor is Asp143. ATP is bound by residues His175, 203-207, 278-280, and 326-330; these read HLGNG, DLR, and GIGEN.

Belongs to the acetokinase family. TdcD subfamily. Homodimer. Requires Mg(2+) as cofactor.

The catalysed reaction is propanoate + ATP = propanoyl phosphate + ADP. It participates in amino-acid degradation; L-threonine degradation via propanoate pathway; propanoate from L-threonine: step 4/4. In terms of biological role, catalyzes the conversion of propionyl phosphate and ADP to propionate and ATP. This is Propionate kinase from Enterobacter sp. (strain 638).